Here is a 251-residue protein sequence, read N- to C-terminus: Octanoyltransferase (251 aa).

Residues 29 to 251 enclose the BPL/LPL catalytic domain; sequence AATPNSLWIC…GQKLSSYLAP (223 aa). Residue 68–75 coordinates substrate; the sequence is RGGQVTYH. Residues 137 to 174 form a disordered region; it reads ARLRPSPQPSPKGRGSSTPVLLPPLPGEGGGGGGPDPD. Substrate contacts are provided by residues 184 to 186 and 197 to 199; these read ALG and GVA. Cysteine 215 acts as the Acyl-thioester intermediate in catalysis.

It belongs to the LipB family.

It is found in the cytoplasm. The catalysed reaction is octanoyl-[ACP] + L-lysyl-[protein] = N(6)-octanoyl-L-lysyl-[protein] + holo-[ACP] + H(+). It participates in protein modification; protein lipoylation via endogenous pathway; protein N(6)-(lipoyl)lysine from octanoyl-[acyl-carrier-protein]: step 1/2. In terms of biological role, catalyzes the transfer of endogenously produced octanoic acid from octanoyl-acyl-carrier-protein onto the lipoyl domains of lipoate-dependent enzymes. Lipoyl-ACP can also act as a substrate although octanoyl-ACP is likely to be the physiological substrate. This Polaromonas sp. (strain JS666 / ATCC BAA-500) protein is Octanoyltransferase.